The following is a 69-amino-acid chain: Putative membrane protein insertion efficiency factor (69 aa).

Belongs to the UPF0161 family.

Its subcellular location is the cell membrane. Could be involved in insertion of integral membrane proteins into the membrane. The chain is Putative membrane protein insertion efficiency factor from Caldanaerobacter subterraneus subsp. tengcongensis (strain DSM 15242 / JCM 11007 / NBRC 100824 / MB4) (Thermoanaerobacter tengcongensis).